The primary structure comprises 648 residues: Exoribonuclease 2 (648 aa).

In terms of domain architecture, RNB spans 191–518; the sequence is RIDLTYLDFI…INHRLIKSII (328 aa). One can recognise an S1 motif domain in the interval 565 to 647; it reads KKKYQANIID…GNKKIIATMI (83 aa).

This sequence belongs to the RNR ribonuclease family. RNase II subfamily.

Its subcellular location is the cytoplasm. The enzyme catalyses Exonucleolytic cleavage in the 3'- to 5'-direction to yield nucleoside 5'-phosphates.. Its function is as follows. Involved in mRNA degradation. Hydrolyzes single-stranded polyribonucleotides processively in the 3' to 5' direction. The sequence is that of Exoribonuclease 2 from Buchnera aphidicola subsp. Cinara cedri (strain Cc).